The sequence spans 93 residues: Sec-independent protein translocase protein TatA (93 aa).

The chain crosses the membrane as a helical span at residues 1–21 (MGNVFSGWHLLVILLVIVLLF). The tract at residues 49-93 (DITRSQDGHPDSQGNFAESASSVPFVKSEKQSEKRASVTEAKKSK) is disordered. Positions 60–70 (SQGNFAESASS) are enriched in polar residues. Residues 75 to 93 (KSEKQSEKRASVTEAKKSK) show a composition bias toward basic and acidic residues.

The protein belongs to the TatA/E family. The Tat system comprises two distinct complexes: a TatABC complex, containing multiple copies of TatA, TatB and TatC subunits, and a separate TatA complex, containing only TatA subunits. Substrates initially bind to the TatABC complex, which probably triggers association of the separate TatA complex to form the active translocon.

It is found in the cell membrane. Functionally, part of the twin-arginine translocation (Tat) system that transports large folded proteins containing a characteristic twin-arginine motif in their signal peptide across membranes. TatA could form the protein-conducting channel of the Tat system. The chain is Sec-independent protein translocase protein TatA from Tropheryma whipplei (strain TW08/27) (Whipple's bacillus).